We begin with the raw amino-acid sequence, 514 residues long: 2,3-bisphosphoglycerate-independent phosphoglycerate mutase (514 aa).

Mn(2+) contacts are provided by D14 and S64. The active-site Phosphoserine intermediate is S64. Substrate-binding positions include H125, 155–156, R187, R193, 263–266, and K336; these read RD and RADR. Mn(2+)-binding residues include D403, H407, D444, H445, and H463.

This sequence belongs to the BPG-independent phosphoglycerate mutase family. As to quaternary structure, monomer. The cofactor is Mn(2+).

The catalysed reaction is (2R)-2-phosphoglycerate = (2R)-3-phosphoglycerate. It participates in carbohydrate degradation; glycolysis; pyruvate from D-glyceraldehyde 3-phosphate: step 3/5. Catalyzes the interconversion of 2-phosphoglycerate and 3-phosphoglycerate. This is 2,3-bisphosphoglycerate-independent phosphoglycerate mutase from Shewanella denitrificans (strain OS217 / ATCC BAA-1090 / DSM 15013).